We begin with the raw amino-acid sequence, 382 residues long: Exostosin-1 homolog (382 aa).

The signal sequence occupies residues 1 to 20 (MQNVMKFHLVIFMLFGSVRL). Residue Asn-268 is glycosylated (N-linked (GlcNAc...) asparagine).

It belongs to the glycosyltransferase 47 family. As to quaternary structure, interacts with rib-2.

Its subcellular location is the endoplasmic reticulum. It is found in the golgi apparatus. Functionally, required for the biosynthesis of heparan sulfate by positively regulating N-acetylglucosamine transferase II (GlcNAcT-II) and glucuronyl transferase II (GlcAT-II) activities of glycosyltransferase rib-2. Probably not directly involved in chondroitin sulfate biosynthesis but negatively regulates chondroitin sulfate levels. Maternally required for normal ventral epidermal enclosure and for embryo elongation during the early stages of embryonic development. In addition, involved in the elongation of the pharyngeal isthmus and in the organization of the actin cytoskeleton in the pharyngeal muscles during the later stages embryonic development. In adults, regulates egg-laying and the normal morphogenesis of the vulva. Also involved in the directed migration of hermaphrodite-specific neurons. The protein is Exostosin-1 homolog (rib-1) of Caenorhabditis elegans.